The chain runs to 559 residues: Formate--tetrahydrofolate ligase (559 aa).

66–73 provides a ligand contact to ATP; sequence TPPGEGKT.

It belongs to the formate--tetrahydrofolate ligase family.

It carries out the reaction (6S)-5,6,7,8-tetrahydrofolate + formate + ATP = (6R)-10-formyltetrahydrofolate + ADP + phosphate. Its pathway is one-carbon metabolism; tetrahydrofolate interconversion. The polypeptide is Formate--tetrahydrofolate ligase (Nocardioides sp. (strain ATCC BAA-499 / JS614)).